Consider the following 113-residue polypeptide: Large ribosomal subunit protein eL31 (113 aa).

This sequence belongs to the eukaryotic ribosomal protein eL31 family. Component of the large ribosomal subunit (LSU). Mature yeast ribosomes consist of a small (40S) and a large (60S) subunit. The 40S small subunit contains 1 molecule of ribosomal RNA (18S rRNA) and at least 33 different proteins. The large 60S subunit contains 3 rRNA molecules (25S, 5.8S and 5S rRNA) and at least 46 different proteins.

It is found in the cytoplasm. Its function is as follows. Component of the ribosome, a large ribonucleoprotein complex responsible for the synthesis of proteins in the cell. The small ribosomal subunit (SSU) binds messenger RNAs (mRNAs) and translates the encoded message by selecting cognate aminoacyl-transfer RNA (tRNA) molecules. The large subunit (LSU) contains the ribosomal catalytic site termed the peptidyl transferase center (PTC), which catalyzes the formation of peptide bonds, thereby polymerizing the amino acids delivered by tRNAs into a polypeptide chain. The nascent polypeptides leave the ribosome through a tunnel in the LSU and interact with protein factors that function in enzymatic processing, targeting, and the membrane insertion of nascent chains at the exit of the ribosomal tunnel. This is Large ribosomal subunit protein eL31 (rpl31) from Schizosaccharomyces pombe (strain 972 / ATCC 24843) (Fission yeast).